The primary structure comprises 902 residues: Cytosolic 10-formyltetrahydrofolate dehydrogenase (902 aa).

The hydrolase domain stretch occupies residues 1–310 (MKIAVIGQSL…PASQYFKTAD (310 aa)). Residue 88 to 90 (QFI) participates in (6R)-10-formyltetrahydrofolate binding. His-106 acts as the Proton donor in catalysis. Asp-142 contacts (6R)-10-formyltetrahydrofolate. Residues 318 to 395 (EEEQKVSEEI…EFIQMVVRRM (78 aa)) enclose the Carrier domain. The residue at position 354 (Ser-354) is an O-(pantetheine 4'-phosphoryl)serine. Residues 417–902 (TVKIPHQLFI…LKTKAVTIEY (486 aa)) form an aldehyde dehydrogenase domain region. NADP(+) is bound by residues 571-573 (IPW), 597-600 (KPAQ), 630-635 (GSLIGQ), 650-651 (GS), and 673-674 (EL). Glu-673 acts as the Proton acceptor in catalysis. The active-site Proton donor is the Cys-707. Residues Lys-757 and 804–806 (ESF) each bind NADP(+).

This sequence in the N-terminal section; belongs to the GART family. In the C-terminal section; belongs to the aldehyde dehydrogenase family. ALDH1L subfamily. As to quaternary structure, homotetramer. In terms of processing, phosphopantetheinylation at Ser-354 by AASDHPPT is required for the formyltetrahydrofolate dehydrogenase activity.

It is found in the cytoplasm. The protein resides in the cytosol. It carries out the reaction (6R)-10-formyltetrahydrofolate + NADP(+) + H2O = (6S)-5,6,7,8-tetrahydrofolate + CO2 + NADPH + H(+). Functionally, cytosolic 10-formyltetrahydrofolate dehydrogenase that catalyzes the NADP(+)-dependent conversion of 10-formyltetrahydrofolate to tetrahydrofolate and carbon dioxide. May also have an NADP(+)-dependent aldehyde dehydrogenase activity towards formaldehyde, acetaldehyde, propionaldehyde, and benzaldehyde. The sequence is that of Cytosolic 10-formyltetrahydrofolate dehydrogenase (aldh1l1) from Xenopus laevis (African clawed frog).